We begin with the raw amino-acid sequence, 596 residues long: MAGRRVNVNVGVLGHIDSGKTALARALSTTASTAAFDKQPQSRERGITLDLGFSCFSVPLPARLRSSLPEFQAAPEAEPEPGEPLLQVTLVDCPGHASLIRTIIGGAQIIDLMMLVIDVTKGMQTQSAECLVIGQIACQKLVVVLNKIDLLPEGKRQAAIDKMTKKMQKTLENTKFRGAPIIPVAAKPGGPEAPETEAPQGIPELIELLTSQISIPTRDPSGPFLMSVDHCFSIKGQGTVMTGTILSGSISLGDSVEIPALKVVKKVKSMQMFHMPITSAMQGDRLGICVTQFDPKLLERGLVCAPESLHTVHAALISVEKIPYFRGPLQTKAKFHITVGHETVMGRLMFFSPAPDNFDQEPILDSFNFSQEYLFQEQYLSKDLTPAVTDNDEADKKAGQATEGHCPRQQWALVEFEKPVTCPRLCLVIGSRLDADIHTNTCRLAFHGILLHGLEDRNYADSFLPRLKVYKLKHKHGLVERAMDDYSVIGRSLFKKETNIQLFVGLKVHLSTGELGIIDSAFGQSGKFKIHIPGGLSPESKKILTPALKKRARAGRGEATRQEESAERSEPSQHVVLSLTFKRYVFDTHKRMVQSP.

In terms of domain architecture, tr-type G spans 5–217 (RVNVNVGVLG…LLTSQISIPT (213 aa)). The tract at residues 14 to 21 (GHIDSGKT) is G1. GDP contacts are provided by Gly19, Thr21, and Ala22. Residues Gly19, Thr21, and Ala22 each contribute to the GTP site. Thr21 lines the Mg(2+) pocket. The segment at 46 to 50 (GITLD) is G2. Mg(2+) contacts are provided by Thr48 and Asp92. The segment at 92–95 (DCPG) is G3. Residues 146–149 (NKID) form a G4 region. Asp149 and Lys187 together coordinate GDP. Residues Asp149 and Lys187 each contribute to the GTP site. The interval 185-187 (AAK) is G5. Phosphoserine is present on Ser537. Thr545 carries the phosphothreonine modification. A Nuclear localization signal motif is present at residues 547–553 (ALKKRAR). The interval 548-573 (LKKRARAGRGEATRQEESAERSEPSQ) is disordered. The segment covering 555–571 (GRGEATRQEESAERSEP) has biased composition (basic and acidic residues). An Omega-N-methylarginine modification is found at Arg556.

This sequence belongs to the TRAFAC class translation factor GTPase superfamily. Classic translation factor GTPase family. SelB subfamily. The cofactor is Mg(2+). It depends on Mn(2+) as a cofactor.

It is found in the cytoplasm. Its subcellular location is the nucleus. It catalyses the reaction GTP + H2O = GDP + phosphate + H(+). Translation factor required for the incorporation of the rare amino acid selenocysteine encoded by UGA codons. Replaces the eRF1-eRF3-GTP ternary complex for the insertion of selenocysteine directed by the UGA codon. Insertion of selenocysteine at UGA codons is mediated by SECISBP2 and EEFSEC: SECISBP2 (1) specifically binds the SECIS sequence once the 80S ribosome encounters an in-frame UGA codon and (2) contacts the RPS27A/eS31 of the 40S ribosome before ribosome stalling. (3) GTP-bound EEFSEC then delivers selenocysteinyl-tRNA(Sec) to the 80S ribosome and adopts a preaccommodated state conformation. (4) After GTP hydrolysis, EEFSEC dissociates from the assembly, selenocysteinyl-tRNA(Sec) accommodates, and peptide bond synthesis and selenoprotein elongation occur. The chain is Selenocysteine-specific elongation factor from Homo sapiens (Human).